The sequence spans 103 residues: Large ribosomal subunit protein uL24 (103 aa).

Belongs to the universal ribosomal protein uL24 family. Part of the 50S ribosomal subunit.

One of two assembly initiator proteins, it binds directly to the 5'-end of the 23S rRNA, where it nucleates assembly of the 50S subunit. Its function is as follows. One of the proteins that surrounds the polypeptide exit tunnel on the outside of the subunit. The polypeptide is Large ribosomal subunit protein uL24 (Haemophilus influenzae (strain ATCC 51907 / DSM 11121 / KW20 / Rd)).